The primary structure comprises 210 residues: Large ribosomal subunit protein bL25 (210 aa).

The interval 190 to 210 is disordered; sequence LKSEGAEGGEAEAGQAEEGEE. Acidic residues predominate over residues 196–210; the sequence is EGGEAEAGQAEEGEE.

This sequence belongs to the bacterial ribosomal protein bL25 family. CTC subfamily. Part of the 50S ribosomal subunit; part of the 5S rRNA/L5/L18/L25 subcomplex. Contacts the 5S rRNA. Binds to the 5S rRNA independently of L5 and L18.

This is one of the proteins that binds to the 5S RNA in the ribosome where it forms part of the central protuberance. The polypeptide is Large ribosomal subunit protein bL25 (Chelativorans sp. (strain BNC1)).